The primary structure comprises 296 residues: Protoheme IX farnesyltransferase (296 aa).

Topologically, residues 1 to 9 are cytoplasmic; it reads MMFKQYLQV. A helical transmembrane segment spans residues 10 to 28; that stretch reads TKPGIIFGNLISVIGGFLL. Topologically, residues 29–37 are periplasmic; sequence ASKGSIDYP. The chain crosses the membrane as a helical span at residues 38–56; the sequence is LFIYTLVGVSLVVASGCVF. At 57 to 78 the chain is on the cytoplasmic side; that stretch reads NNYIDRDIDRKMERTKNRVLVK. The chain crosses the membrane as a helical span at residues 79–97; that stretch reads GLISPAVSLVYATLLGIAG. The Periplasmic segment spans residues 98-107; sequence FMLLWFGANP. The helical transmembrane segment at 108–126 threads the bilayer; it reads LACWLGVMGFVVYVGVYSL. Topologically, residues 127-197 are cytoplasmic; that stretch reads YMKRHSVYGT…YQAANIPVLP (71 aa). The chain crosses the membrane as a helical span at residues 198-216; sequence VVKGISVAKNHITLYIIAF. The Periplasmic portion of the chain corresponds to 217–228; the sequence is AVATLMLSLGGY. A helical membrane pass occupies residues 229–247; it reads AGYKYLVVAAAVSVWWLGM. The Cytoplasmic portion of the chain corresponds to 248–268; the sequence is ALRGYKVADDRIWARKLFGFS. A helical transmembrane segment spans residues 269–287; sequence IIAITALSVMMSVDFMVPD. Topologically, residues 288–296 are periplasmic; it reads SHTLLAAVW.

This sequence belongs to the UbiA prenyltransferase family. Protoheme IX farnesyltransferase subfamily.

It localises to the cell inner membrane. It catalyses the reaction heme b + (2E,6E)-farnesyl diphosphate + H2O = Fe(II)-heme o + diphosphate. Its pathway is porphyrin-containing compound metabolism; heme O biosynthesis; heme O from protoheme: step 1/1. In terms of biological role, converts heme B (protoheme IX) to heme O by substitution of the vinyl group on carbon 2 of heme B porphyrin ring with a hydroxyethyl farnesyl side group. In Shigella flexneri, this protein is Protoheme IX farnesyltransferase.